We begin with the raw amino-acid sequence, 283 residues long: Elongation factor Ts (283 aa).

Residues 80 to 83 are involved in Mg(2+) ion dislocation from EF-Tu; sequence TDFV.

The protein belongs to the EF-Ts family.

It localises to the cytoplasm. In terms of biological role, associates with the EF-Tu.GDP complex and induces the exchange of GDP to GTP. It remains bound to the aminoacyl-tRNA.EF-Tu.GTP complex up to the GTP hydrolysis stage on the ribosome. The sequence is that of Elongation factor Ts from Salmonella choleraesuis (strain SC-B67).